A 142-amino-acid polypeptide reads, in one-letter code: Hemoglobin subunit alpha-A (142 aa).

A Globin domain is found at 2-142 (VLSANDKTNV…VGNVLTAKYR (141 aa)). Position 59 (H59) interacts with O2. H88 is a heme b binding site.

This sequence belongs to the globin family. As to quaternary structure, heterotetramer of two alpha chains and two beta chains. As to expression, red blood cells.

Involved in oxygen transport from the lung to the various peripheral tissues. This is Hemoglobin subunit alpha-A (HBAA) from Aegypius monachus (Cinereous vulture).